Reading from the N-terminus, the 610-residue chain is Propanediol dehydratase-reactivating factor large subunit (610 aa).

ATP is bound at residue 11–13; sequence NSS. 3 residues coordinate Mg(2+): Thr-105, Asp-166, and Asp-183. Residues 459–462, 557–558, and Arg-591 contribute to the ATP site; these read EEIK and GS.

It belongs to the DdrA/PduG family. Forms a heterotetramer PduG(2)/PduH(2). Requires Mg(2+) as cofactor.

The protein localises to the bacterial microcompartment. The enzyme catalyses ATP + H2O = ADP + phosphate + H(+). Its pathway is polyol metabolism; 1,2-propanediol degradation. Large subunit of the propanediol dehydratase-reactivating factor (DDR), which reactivates suicidally inhibited adenosylcobalamin-dependent propanediol dehydratase (diol dehydratase, DDH) found in the bacterial microcompartment (BMC) dedicated to 1,2-propanediol (1,2-PD) degradation. Reactivates inactivated DDH in the presence of ATP, Mg(2+) and free adenosylcobalamin (AdoCbl), by mediating the exchange of the tightly bound damaged cofactor AdoCbl for a free intact one. This subunit contains the adenosine nucleotide binding site. Functionally, expression of a cosmid containing the full 21-gene pdu operon in E.coli allows E.coli to grow on 1,2-propanediol (1,2-PD) with the appearance of bacterial microcompartments (BMC) in its cytoplasm. Its function is as follows. The 1,2-PD-specific bacterial microcompartment (BMC) concentrates low levels of 1,2-PD catabolic enzymes, concentrates volatile reaction intermediates thus enhancing pathway flux and keeps the level of toxic, mutagenic propionaldehyde low. The protein is Propanediol dehydratase-reactivating factor large subunit of Citrobacter freundii.